The primary structure comprises 262 residues: Indole-3-glycerol phosphate synthase (262 aa).

This sequence belongs to the TrpC family.

It catalyses the reaction 1-(2-carboxyphenylamino)-1-deoxy-D-ribulose 5-phosphate + H(+) = (1S,2R)-1-C-(indol-3-yl)glycerol 3-phosphate + CO2 + H2O. The protein operates within amino-acid biosynthesis; L-tryptophan biosynthesis; L-tryptophan from chorismate: step 4/5. In Staphylococcus epidermidis (strain ATCC 35984 / DSM 28319 / BCRC 17069 / CCUG 31568 / BM 3577 / RP62A), this protein is Indole-3-glycerol phosphate synthase.